The following is a 149-amino-acid chain: Putative pre-16S rRNA nuclease (149 aa).

Belongs to the YqgF nuclease family.

The protein localises to the cytoplasm. Functionally, could be a nuclease involved in processing of the 5'-end of pre-16S rRNA. This Heliobacterium modesticaldum (strain ATCC 51547 / Ice1) protein is Putative pre-16S rRNA nuclease.